Here is a 145-residue protein sequence, read N- to C-terminus: 3-dehydroquinate dehydratase (145 aa).

Tyrosine 24 functions as the Proton acceptor in the catalytic mechanism. Substrate contacts are provided by asparagine 75, histidine 81, and aspartate 88. Catalysis depends on histidine 101, which acts as the Proton donor. Residues 102–103 and arginine 112 each bind substrate; that span reads LS.

Belongs to the type-II 3-dehydroquinase family. As to quaternary structure, homododecamer.

It catalyses the reaction 3-dehydroquinate = 3-dehydroshikimate + H2O. The protein operates within metabolic intermediate biosynthesis; chorismate biosynthesis; chorismate from D-erythrose 4-phosphate and phosphoenolpyruvate: step 3/7. Functionally, catalyzes a trans-dehydration via an enolate intermediate. The sequence is that of 3-dehydroquinate dehydratase from Phenylobacterium zucineum (strain HLK1).